We begin with the raw amino-acid sequence, 129 residues long: Fluoride-specific ion channel FluC 2 (129 aa).

4 consecutive transmembrane segments (helical) span residues 3 to 23 (FLYV…MNLW), 32 to 52 (ATLA…PFLA), 59 to 79 (LVLL…FSAF), and 90 to 110 (GEVV…LVMV). Na(+) contacts are provided by Gly71 and Thr74.

The protein belongs to the fluoride channel Fluc/FEX (TC 1.A.43) family.

Its subcellular location is the cell membrane. It catalyses the reaction fluoride(in) = fluoride(out). With respect to regulation, na(+) is not transported, but it plays an essential structural role and its presence is essential for fluoride channel function. Its function is as follows. Fluoride-specific ion channel. Important for reducing fluoride concentration in the cell, thus reducing its toxicity. This Listeria innocua serovar 6a (strain ATCC BAA-680 / CLIP 11262) protein is Fluoride-specific ion channel FluC 2.